The sequence spans 276 residues: NAD kinase (276 aa).

D61 serves as the catalytic Proton acceptor. Residues 61-62, 134-135, R145, K162, D164, V172, 175-180, and Q234 each bind NAD(+); these read DG, ND, and TAYSFS.

Belongs to the NAD kinase family. A divalent metal cation serves as cofactor.

Its subcellular location is the cytoplasm. It catalyses the reaction NAD(+) + ATP = ADP + NADP(+) + H(+). In terms of biological role, involved in the regulation of the intracellular balance of NAD and NADP, and is a key enzyme in the biosynthesis of NADP. Catalyzes specifically the phosphorylation on 2'-hydroxyl of the adenosine moiety of NAD to yield NADP. In Clostridium perfringens (strain 13 / Type A), this protein is NAD kinase.